A 479-amino-acid chain; its full sequence is Ribosomal RNA small subunit methyltransferase F (479 aa).

Residues 125–131 (AAAPGSK), E149, D176, and D194 contribute to the S-adenosyl-L-methionine site. Residue C247 is the Nucleophile of the active site.

Belongs to the class I-like SAM-binding methyltransferase superfamily. RsmB/NOP family.

It is found in the cytoplasm. It carries out the reaction cytidine(1407) in 16S rRNA + S-adenosyl-L-methionine = 5-methylcytidine(1407) in 16S rRNA + S-adenosyl-L-homocysteine + H(+). Its function is as follows. Specifically methylates the cytosine at position 1407 (m5C1407) of 16S rRNA. The chain is Ribosomal RNA small subunit methyltransferase F from Escherichia coli (strain SE11).